Here is a 370-residue protein sequence, read N- to C-terminus: 3-isopropylmalate dehydrogenase 1 (370 aa).

Substrate contacts are provided by Arg98, Arg108, Arg136, and Asp227. Mg(2+) contacts are provided by Asp227, Asp251, and Asp255. Residue 289-301 (GSAPDIAGQGIAN) participates in NAD(+) binding.

The protein belongs to the isocitrate and isopropylmalate dehydrogenases family. LeuB type 1 subfamily. Homodimer. The cofactor is Mg(2+). Mn(2+) serves as cofactor.

Its subcellular location is the cytoplasm. It carries out the reaction (2R,3S)-3-isopropylmalate + NAD(+) = 4-methyl-2-oxopentanoate + CO2 + NADH. The protein operates within amino-acid biosynthesis; L-leucine biosynthesis; L-leucine from 3-methyl-2-oxobutanoate: step 3/4. Functionally, catalyzes the oxidation of 3-carboxy-2-hydroxy-4-methylpentanoate (3-isopropylmalate) to 3-carboxy-4-methyl-2-oxopentanoate. The product decarboxylates to 4-methyl-2 oxopentanoate. The protein is 3-isopropylmalate dehydrogenase 1 of Bordetella bronchiseptica (strain ATCC BAA-588 / NCTC 13252 / RB50) (Alcaligenes bronchisepticus).